The primary structure comprises 98 residues: Integration host factor subunit alpha (98 aa).

Positions 49–70 are disordered; sequence FGNFDLRDKNQRPGRNPKTGED.

It belongs to the bacterial histone-like protein family. Heterodimer of an alpha and a beta chain.

Functionally, this protein is one of the two subunits of integration host factor, a specific DNA-binding protein that functions in genetic recombination as well as in transcriptional and translational control. The sequence is that of Integration host factor subunit alpha from Serratia proteamaculans (strain 568).